Consider the following 407-residue polypeptide: Probable tRNA sulfurtransferase (407 aa).

The region spanning 61 to 165 is the THUMP domain; sequence NEITYRLSKI…LDAIYMYEEV (105 aa). ATP-binding positions include 183–184, 208–209, R265, G287, and Q296; these read ML and HF.

This sequence belongs to the ThiI family.

It localises to the cytoplasm. The enzyme catalyses [ThiI sulfur-carrier protein]-S-sulfanyl-L-cysteine + a uridine in tRNA + 2 reduced [2Fe-2S]-[ferredoxin] + ATP + H(+) = [ThiI sulfur-carrier protein]-L-cysteine + a 4-thiouridine in tRNA + 2 oxidized [2Fe-2S]-[ferredoxin] + AMP + diphosphate. The catalysed reaction is [ThiS sulfur-carrier protein]-C-terminal Gly-Gly-AMP + S-sulfanyl-L-cysteinyl-[cysteine desulfurase] + AH2 = [ThiS sulfur-carrier protein]-C-terminal-Gly-aminoethanethioate + L-cysteinyl-[cysteine desulfurase] + A + AMP + 2 H(+). The protein operates within cofactor biosynthesis; thiamine diphosphate biosynthesis. Its function is as follows. Catalyzes the ATP-dependent transfer of a sulfur to tRNA to produce 4-thiouridine in position 8 of tRNAs, which functions as a near-UV photosensor. Also catalyzes the transfer of sulfur to the sulfur carrier protein ThiS, forming ThiS-thiocarboxylate. This is a step in the synthesis of thiazole, in the thiamine biosynthesis pathway. The sulfur is donated as persulfide by IscS. The polypeptide is Probable tRNA sulfurtransferase (Staphylococcus aureus (strain NCTC 8325 / PS 47)).